Reading from the N-terminus, the 577-residue chain is Adenine deaminase (577 aa).

It belongs to the metallo-dependent hydrolases superfamily. Adenine deaminase family. Mn(2+) is required as a cofactor.

It carries out the reaction adenine + H2O + H(+) = hypoxanthine + NH4(+). The chain is Adenine deaminase from Bacillus velezensis (strain DSM 23117 / BGSC 10A6 / LMG 26770 / FZB42) (Bacillus amyloliquefaciens subsp. plantarum).